A 151-amino-acid chain; its full sequence is Austinoid biosynthesis clusters protein F (151 aa).

It belongs to the trt14 isomerase family. Homodimer.

It functions in the pathway secondary metabolite biosynthesis; terpenoid biosynthesis. Functionally, part of the gene cluster B that mediates the biosynthesis of the fungal meroterpenoid acetoxydehydroaustin. The first step of the pathway is the synthesis of 3,5-dimethylorsellinic acid by the polyketide synthase ausA. 3,5-dimethylorsellinic acid is then prenylated by the polyprenyl transferase ausN. Further epoxidation by the FAD-dependent monooxygenase ausM and cyclization by the probable terpene cyclase ausL lead to the formation of protoaustinoid A. Protoaustinoid A is then oxidized to spiro-lactone preaustinoid A3 by the combined action of the FAD-binding monooxygenases ausB and ausC, and the dioxygenase ausE. Acid-catalyzed keto-rearrangement and ring contraction of the tetraketide portion of preaustinoid A3 by ausJ lead to the formation of preaustinoid A4. The aldo-keto reductase ausK, with the help of ausH, is involved in the next step by transforming preaustinoid A4 into isoaustinone which is in turn hydroxylated by the P450 monooxygenase ausI to form austinolide. The cytochrome P450 monooxygenase ausG then modifies austinolide to austinol. Austinol is further acetylated to austin by the O-acetyltransferase ausP, which spontaneously changes to dehydroaustin. The cytochrome P450 monooxygenase then converts dehydroaustin is into 7-dehydrodehydroaustin. The hydroxylation catalyzed by ausR permits the second O-acetyltransferase ausQ to add an additional acetyl group to the molecule, leading to the formation of acetoxydehydroaustin. Due to genetic rearrangements of the clusters and the subsequent loss of some enzymes, the end product of the Penicillium brasilianum austinoid biosynthesis clusters is acetoxydehydroaustin. The chain is Austinoid biosynthesis clusters protein F from Penicillium brasilianum.